The following is a 249-amino-acid chain: Type III pantothenate kinase (249 aa).

Residue 6–13 (DCGNSFIK) participates in ATP binding. Substrate-binding positions include Y93 and 100–103 (GMDR). The active-site Proton acceptor is D102. D122 serves as a coordination point for K(+). T125 serves as a coordination point for ATP. T181 provides a ligand contact to substrate.

Belongs to the type III pantothenate kinase family. In terms of assembly, homodimer. The cofactor is NH4(+). K(+) is required as a cofactor.

Its subcellular location is the cytoplasm. It catalyses the reaction (R)-pantothenate + ATP = (R)-4'-phosphopantothenate + ADP + H(+). Its pathway is cofactor biosynthesis; coenzyme A biosynthesis; CoA from (R)-pantothenate: step 1/5. Catalyzes the phosphorylation of pantothenate (Pan), the first step in CoA biosynthesis. This is Type III pantothenate kinase from Pseudomonas putida (strain W619).